The following is a 407-amino-acid chain: ATP-citrate synthase subunit alpha chain protein 1 (407 aa).

3 residues coordinate citrate: N327, T329, and R360.

The protein belongs to the succinate/malate CoA ligase beta subunit family. Heterooctamer of 4 alpha and 4 beta chains.

It is found in the cytoplasm. It localises to the cytosol. The enzyme catalyses oxaloacetate + acetyl-CoA + ADP + phosphate = citrate + ATP + CoA. ATP citrate-lyase is the primary enzyme responsible for the synthesis of cytosolic acetyl-CoA, used for the elongation of fatty acids and biosynthesis of isoprenoids, flavonoids and malonated derivatives. May supply substrate to the cytosolic acetyl-CoA carboxylase, which generates the malonyl-CoA used for the synthesis of a multitude of compounds, including very long chain fatty acids and flavonoids. In contrast to all known animal ACL enzymes having a homomeric structure, plant ACLs are composed of alpha and beta chains. In Oryza sativa subsp. japonica (Rice), this protein is ATP-citrate synthase subunit alpha chain protein 1 (ACLA-1).